We begin with the raw amino-acid sequence, 607 residues long: Isocitrate dehydrogenase kinase/phosphatase (607 aa).

ATP contacts are provided by residues 328 to 334 (APGIKGL) and lysine 349. Residue aspartate 384 is part of the active site.

Belongs to the AceK family.

It localises to the cytoplasm. It catalyses the reaction L-seryl-[isocitrate dehydrogenase] + ATP = O-phospho-L-seryl-[isocitrate dehydrogenase] + ADP + H(+). Its function is as follows. Bifunctional enzyme which can phosphorylate or dephosphorylate isocitrate dehydrogenase (IDH) on a specific serine residue. This is a regulatory mechanism which enables bacteria to bypass the Krebs cycle via the glyoxylate shunt in response to the source of carbon. When bacteria are grown on glucose, IDH is fully active and unphosphorylated, but when grown on acetate or ethanol, the activity of IDH declines drastically concomitant with its phosphorylation. The chain is Isocitrate dehydrogenase kinase/phosphatase from Cupriavidus metallidurans (strain ATCC 43123 / DSM 2839 / NBRC 102507 / CH34) (Ralstonia metallidurans).